Reading from the N-terminus, the 148-residue chain is 3-dehydroquinate dehydratase (148 aa).

Tyr23 (proton acceptor) is an active-site residue. Residues Asn75, His81, and Asp88 each contribute to the substrate site. His101 serves as the catalytic Proton donor. Substrate-binding positions include 102 to 103 (LS) and Arg112.

This sequence belongs to the type-II 3-dehydroquinase family. In terms of assembly, homododecamer.

The catalysed reaction is 3-dehydroquinate = 3-dehydroshikimate + H2O. The protein operates within metabolic intermediate biosynthesis; chorismate biosynthesis; chorismate from D-erythrose 4-phosphate and phosphoenolpyruvate: step 3/7. Its function is as follows. Catalyzes a trans-dehydration via an enolate intermediate. This Xanthomonas axonopodis pv. citri (strain 306) protein is 3-dehydroquinate dehydratase.